Here is a 191-residue protein sequence, read N- to C-terminus: Bcl-2-like protein 10 (191 aa).

A BH1 motif is present at residues 79-98 (LSKDQDFSWSQLVMLLAFAG). Residue lysine 112 forms a Glycyl lysine isopeptide (Lys-Gly) (interchain with G-Cter in ubiquitin) linkage. The short motif at 144–155 (RLEALGGWDGFC) is the BH2 element. The helical transmembrane segment at 166–183 (FWRRLLIQAFLSGFFATA) threads the bilayer.

The protein belongs to the Bcl-2 family. Interacts with BAX. Interacts with BCL2 and BCL2L1/BCLX. Interacts with APAF1. Interacts with ITPR1, ITPR2 and ITPR3; the interaction with ITPR1 is increased in the presence of AHCLY1. Interacts with AHCYL1. Interacts with HIP1R (via ENTH and I/LWEQ domains). Interacts with CASP9. Interacts with BCL2L11/BIM. Interacts with BIK. Interacts with UBQLN4. Interacts with NME2/NM23-H2. Interacts with PMAIP1/NOXA. Interacts with TPX2. Interacts with UBQLN1; in the cytoplasm. Interacts (via BH1 domain) with BECN1. It depends on Ca(2+) as a cofactor. Post-translationally, monoubiquitinated by UBQLN1; results in stabilization of BCL2L10 protein abundance and in relocalization from mitochondria to cytoplasm. As to expression, expressed in multiple embryonic tissues. Restricted to the ovary and testis in adult mice.

It is found in the mitochondrion. It localises to the nucleus membrane. The protein localises to the endoplasmic reticulum. Its subcellular location is the cytoplasm. The protein resides in the cytoskeleton. It is found in the spindle. Functionally, promotes cell survival by suppressing apoptosis induced by BAX but not BAK. Increases binding of AHCYL1/IRBIT to ITPR1. Reduces ITPR1-mediated calcium release from the endoplasmic reticulum cooperatively with AHCYL1/IRBIT under normal cellular conditions. Under apoptotic stress conditions, dissociates from ITPR1 and is displaced from mitochondria-associated endoplasmic reticulum membranes, leading to increased Ca(2+) transfer to mitochondria which promotes apoptosis. Required for the correct formation of the microtubule organizing center during oocyte cell division, potentially via regulation of protein abundance and localization of other microtubule organizing center components such as AURKA and TPX2. The chain is Bcl-2-like protein 10 from Mus musculus (Mouse).